The sequence spans 197 residues: Ribose 1,5-bisphosphate phosphokinase PhnN (197 aa).

Position 21-28 (21-28) interacts with ATP; that stretch reads GPSGAGKD.

Belongs to the ribose 1,5-bisphosphokinase family.

It carries out the reaction alpha-D-ribose 1,5-bisphosphate + ATP = 5-phospho-alpha-D-ribose 1-diphosphate + ADP. Its pathway is metabolic intermediate biosynthesis; 5-phospho-alpha-D-ribose 1-diphosphate biosynthesis; 5-phospho-alpha-D-ribose 1-diphosphate from D-ribose 5-phosphate (route II): step 3/3. Catalyzes the phosphorylation of ribose 1,5-bisphosphate to 5-phospho-D-ribosyl alpha-1-diphosphate (PRPP). The chain is Ribose 1,5-bisphosphate phosphokinase PhnN from Rhizobium etli (strain CIAT 652).